Reading from the N-terminus, the 948-residue chain is Translation initiation factor IF-2 (948 aa).

Disordered regions lie at residues 61–120, 162–243, and 255–285; these read IQAN…PALI, KSRE…TQSA, and QEKD…SHKI. Basic and acidic residues predominate over residues 68–78; it reads KNPEQDNKDDL. Residues 173-189 show a composition bias toward low complexity; that stretch reads SNTNNANSTNNANNVNN. A compositionally biased stretch (basic and acidic residues) spans 190–207; the sequence is AKKEISEVKKQEQEIKRH. A compositionally biased stretch (basic residues) spans 208–219; sequence ENIKRRTGFRVI. Polar residues predominate over residues 230–243; the sequence is ENSVAESKKPTQSA. Residues 447–616 form the tr-type G domain; it reads ERPPVVTIMG…LIQADIMELK (170 aa). A G1 region spans residues 456 to 463; sequence GHVDHGKT. 456-463 serves as a coordination point for GTP; that stretch reads GHVDHGKT. The interval 481-485 is G2; it reads GITQH. Positions 502 to 505 are G3; that stretch reads DTPG. GTP contacts are provided by residues 502–506 and 556–559; these read DTPGH and NKMD. Positions 556 to 559 are G4; that stretch reads NKMD. The tract at residues 592–594 is G5; the sequence is SAK.

This sequence belongs to the TRAFAC class translation factor GTPase superfamily. Classic translation factor GTPase family. IF-2 subfamily.

The protein localises to the cytoplasm. Its function is as follows. One of the essential components for the initiation of protein synthesis. Protects formylmethionyl-tRNA from spontaneous hydrolysis and promotes its binding to the 30S ribosomal subunits. Also involved in the hydrolysis of GTP during the formation of the 70S ribosomal complex. In Helicobacter pylori (strain Shi470), this protein is Translation initiation factor IF-2.